A 259-amino-acid chain; its full sequence is tRNA (guanine-N(7)-)-methyltransferase (259 aa).

The tract at residues 1 to 36 (MTFPSHNPPETGHPSAAPDEALPAAEAPVPGDPEAR) is disordered. Over residues 14–29 (PSAAPDEALPAAEAPV) the composition is skewed to low complexity. Residues E91, E116, D143, and D166 each coordinate S-adenosyl-L-methionine. Residue D166 is part of the active site. Residues K170, D202, and 237-240 (TKFE) each bind substrate.

The protein belongs to the class I-like SAM-binding methyltransferase superfamily. TrmB family.

The enzyme catalyses guanosine(46) in tRNA + S-adenosyl-L-methionine = N(7)-methylguanosine(46) in tRNA + S-adenosyl-L-homocysteine. Its pathway is tRNA modification; N(7)-methylguanine-tRNA biosynthesis. Functionally, catalyzes the formation of N(7)-methylguanine at position 46 (m7G46) in tRNA. The polypeptide is tRNA (guanine-N(7)-)-methyltransferase (Aromatoleum aromaticum (strain DSM 19018 / LMG 30748 / EbN1) (Azoarcus sp. (strain EbN1))).